The primary structure comprises 417 residues: Gamma-glutamyl phosphate reductase (417 aa).

The protein belongs to the gamma-glutamyl phosphate reductase family.

It localises to the cytoplasm. It catalyses the reaction L-glutamate 5-semialdehyde + phosphate + NADP(+) = L-glutamyl 5-phosphate + NADPH + H(+). Its pathway is amino-acid biosynthesis; L-proline biosynthesis; L-glutamate 5-semialdehyde from L-glutamate: step 2/2. Its function is as follows. Catalyzes the NADPH-dependent reduction of L-glutamate 5-phosphate into L-glutamate 5-semialdehyde and phosphate. The product spontaneously undergoes cyclization to form 1-pyrroline-5-carboxylate. The chain is Gamma-glutamyl phosphate reductase from Pectobacterium carotovorum subsp. carotovorum (strain PC1).